A 426-amino-acid polypeptide reads, in one-letter code: Pyruvate, phosphate dikinase regulatory protein, chloroplastic (426 aa).

The N-terminal 41 residues, 1 to 41 (MIGCAKPLAAPLQAWARPPSPAGRRLPPSFCAPDTSPALTR), are a transit peptide targeting the chloroplast. Disordered stretches follow at residues 1-76 (MIGC…HLDR) and 94-124 (AALS…DGED). Low complexity predominate over residues 94–119 (AALSSASVSAPPVIKSPRPEDAAVAA). ADP is bound at residue 153-160 (HSVNAALG).

It belongs to the pyruvate, phosphate/water dikinase regulatory protein family. PDRP subfamily. As to quaternary structure, homodimer at pH 7.5 and homotetramer at pH 8.3. Requires Mg(2+) as cofactor. In terms of tissue distribution, leaf mesophyll-cells.

The protein localises to the plastid. The protein resides in the chloroplast stroma. It catalyses the reaction N(tele)-phospho-L-histidyl/L-threonyl-[pyruvate, phosphate dikinase] + ADP = N(tele)-phospho-L-histidyl/O-phospho-L-threonyl-[pyruvate, phosphate dikinase] + AMP + H(+). The catalysed reaction is N(tele)-phospho-L-histidyl/O-phospho-L-threonyl-[pyruvate, phosphate dikinase] + phosphate + H(+) = N(tele)-phospho-L-histidyl/L-threonyl-[pyruvate, phosphate dikinase] + diphosphate. It participates in photosynthesis; C4 acid pathway. With respect to regulation, regulated by light/dark exposure. Functionally, bifunctional serine/threonine kinase and phosphorylase involved in the dark/light-mediated regulation of PPDK by catalyzing its phosphorylation/dephosphorylation. Dark/light-induced changes in stromal concentrations of the competing ADP and Pi substrates govern the direction of the reaction. In the dark, phosphorylates the catalytic intermediate of PPDK (PPDK-HisP), inactivating it. Light exposure induces the phosphorolysis reaction that reactivates PPDK. Phosphorylates PPDK at both Ser-528 and Thr-527. Can use ADP as a high specificity substrate and GDP as a lower affinity substrate, but has no activity with UDP. The sequence is that of Pyruvate, phosphate dikinase regulatory protein, chloroplastic (PDRP1) from Zea mays (Maize).